Consider the following 171-residue polypeptide: ATP synthase subunit b (171 aa).

Residues 2–22 traverse the membrane as a helical segment; it reads VLVKMALGFLILLSPLCAMEL.

It belongs to the ATPase B chain family. In terms of assembly, F-type ATPases have 2 components, F(1) - the catalytic core - and F(0) - the membrane proton channel. F(1) has five subunits: alpha(3), beta(3), gamma(1), delta(1), epsilon(1). F(0) has three main subunits: a(1), b(2) and c(10-14). The alpha and beta chains form an alternating ring which encloses part of the gamma chain. F(1) is attached to F(0) by a central stalk formed by the gamma and epsilon chains, while a peripheral stalk is formed by the delta and b chains.

It localises to the cell inner membrane. In terms of biological role, f(1)F(0) ATP synthase produces ATP from ADP in the presence of a proton or sodium gradient. F-type ATPases consist of two structural domains, F(1) containing the extramembraneous catalytic core and F(0) containing the membrane proton channel, linked together by a central stalk and a peripheral stalk. During catalysis, ATP synthesis in the catalytic domain of F(1) is coupled via a rotary mechanism of the central stalk subunits to proton translocation. Its function is as follows. Component of the F(0) channel, it forms part of the peripheral stalk, linking F(1) to F(0). This is ATP synthase subunit b from Helicobacter acinonychis (strain Sheeba).